The chain runs to 395 residues: Transcriptional coactivator yorkie (395 aa).

The disordered stretch occupies residues 73–100 (NSFFTPPAPSHSRANSADSTYDAGSQSS). A phosphoserine mark is found at serine 82, serine 88, serine 100, serine 117, and serine 145. Over residues 84 to 100 (SRANSADSTYDAGSQSS) the composition is skewed to polar residues. Disordered stretches follow at residues 129–150 (PSPQ…PASL) and 162–199 (AAAA…PASS). A Phosphoserine; by CDK7 modification is found at serine 146. A Phosphoserine modification is found at serine 149. The span at 162 to 179 (AAAANNPNANPSSQQQPA) shows a compositional bias: low complexity. Serine 227 is subject to Phosphoserine. Tyrosine 228 carries the phosphotyrosine modification. At serine 232 the chain carries Phosphoserine. WW domains follow at residues 241–274 (GALP…DPRI) and 310–343 (GPLP…DPRM).

It belongs to the YAP1 family. Interacts (via WW domains) with wts. Interacts (via N-terminus) with sd (via C-terminus) and this interaction enhances the transcriptional activity of sd. The phosphorylated form interacts with 14-3-3epsilon and 14-3-3zeta. Interacts with Ack and ex. Post-translationally, its activity is regulated by multiple phosphorylation events. Phosphorylation at Ser-88, Ser-145 and Ser-227 negatively regulate its activity and restrict its nuclear localization. Wts-mediated phosphorylation at Ser-145 promotes interaction with 14-3-3epsilon and 14-3-3zeta. Phosphorylation at Ser-88 and Ser-227 regulate nuclear localization and activity independent of 14-3-3 association. Phosphorylation at Ser-146 by Cdk7 promotes its stability by preventing ubiquitination by the DCX(DCAF12) complex. In terms of processing, ubiquitinated by the DCX(DCAF12) complex, leading to its degradation. Phosphorylation at Ser-146 by Cdk7 prevents ubiquitination by the DCX(DCAF12) complex.

Its subcellular location is the cytoplasm. The protein resides in the nucleus. In terms of biological role, transcriptional coactivator which is the critical downstream regulatory target in the Hippo/SWH (Sav/Wts/Hpo) signaling pathway that plays a pivotal role in organ size control and tumor suppression by restricting proliferation and promoting apoptosis. The core of this pathway is composed of a kinase cascade wherein Hippo (Hpo), in complex with its regulatory protein Salvador (Sav), phosphorylates and activates Warts (Wts) in complex with its regulatory protein Mats, which in turn phosphorylates and inactivates the Yorkie (Yki) oncoprotein. The Hippo/SWH signaling pathway inhibits the activity of the transcriptional complex formed by Scalloped (sd) and Yki and the target genes of this pathway include cyclin-E (cycE), diap1 and bantam. Regulates the expression of G1/S-specific CycE and diap1, thereby promoting cell proliferation and inhibiting apoptosis. Required for transcriptional activity of sd in wing imaginal disks. Induces expression of expression of vestigial (vg) in wing and haltere disks and the expression of transcription factor E2f (E2f). This is Transcriptional coactivator yorkie (yki) from Drosophila melanogaster (Fruit fly).